A 384-amino-acid polypeptide reads, in one-letter code: uncharacterized protein (384 aa).

12 helical membrane passes run 22-42, 52-72, 81-101, 106-126, 143-163, 164-184, 202-222, 240-260, 276-296, 299-319, 327-347, and 352-372; these read LAFF…PFAK, LGLL…LTGV, AVIL…VLMN, MAIA…AMNI, FHGL…ALLW, LGLN…ILLL, LFVF…VMFL, GMSP…MTLG, VLLG…SIDS, AAII…PILF, VMPA…GILA, and IGFI…ALLL.

It belongs to the major facilitator superfamily.

The protein localises to the membrane. This is an uncharacterized protein from Yersinia pestis.